Reading from the N-terminus, the 594-residue chain is Alanine--tRNA ligase (594 aa).

4 residues coordinate Zn(2+): His-456, His-460, Cys-558, and His-562.

It belongs to the class-II aminoacyl-tRNA synthetase family. Zn(2+) is required as a cofactor.

Its subcellular location is the cytoplasm. The catalysed reaction is tRNA(Ala) + L-alanine + ATP = L-alanyl-tRNA(Ala) + AMP + diphosphate. Functionally, catalyzes the attachment of alanine to tRNA(Ala) in a two-step reaction: alanine is first activated by ATP to form Ala-AMP and then transferred to the acceptor end of tRNA(Ala). Also edits incorrectly charged Ser-tRNA(Ala) and Gly-tRNA(Ala) via its editing domain. The polypeptide is Alanine--tRNA ligase (alaS) (Borreliella burgdorferi (strain ATCC 35210 / DSM 4680 / CIP 102532 / B31) (Borrelia burgdorferi)).